We begin with the raw amino-acid sequence, 651 residues long: Chaperone protein HtpG (651 aa).

The tract at residues 1–353 (MAPHVEQLEF…AQDMSLNVSR (353 aa)) is a; substrate-binding. The b stretch occupies residues 354-569 (EILQQDRQIR…TFGITPALAR (216 aa)). Residues 570–651 (MYRASGQPVP…RLTRMVGEQS (82 aa)) are c.

Belongs to the heat shock protein 90 family. Homodimer.

Its subcellular location is the cytoplasm. Functionally, molecular chaperone. Has ATPase activity. In Mycolicibacterium gilvum (strain PYR-GCK) (Mycobacterium gilvum (strain PYR-GCK)), this protein is Chaperone protein HtpG.